Consider the following 58-residue polypeptide: uncharacterized protein (58 aa).

This is an uncharacterized protein from Bacillus subtilis (strain 168).